A 42-amino-acid polypeptide reads, in one-letter code: uncharacterized protein (42 aa).

The protein localises to the plastid. Its subcellular location is the chloroplast. This is an uncharacterized protein from Diacronema lutheri (Unicellular marine alga).